Reading from the N-terminus, the 85-residue chain is UPF0335 protein WP0746 (85 aa).

Belongs to the UPF0335 family.

This is UPF0335 protein WP0746 from Wolbachia pipientis subsp. Culex pipiens (strain wPip).